The primary structure comprises 93 residues: Cobalt transport protein CbiN (93 aa).

The next 2 membrane-spanning stretches (helical) occupy residues 5–25 and 63–83; these read LILL…NHGG and LLFT…LGYA.

Belongs to the CbiN family. Forms an energy-coupling factor (ECF) transporter complex composed of an ATP-binding protein (A component, CbiO), a transmembrane protein (T component, CbiQ) and 2 possible substrate-capture proteins (S components, CbiM and CbiN) of unknown stoichimetry.

It localises to the cell inner membrane. Its pathway is cofactor biosynthesis; adenosylcobalamin biosynthesis. Its function is as follows. Part of the energy-coupling factor (ECF) transporter complex CbiMNOQ involved in cobalt import. This is Cobalt transport protein CbiN from Klebsiella pneumoniae (strain 342).